The chain runs to 330 residues: Transcription factor TGA6 (330 aa).

A compositionally biased stretch (polar residues) spans 1–13 (MADTSSRTDVSTD). Positions 1–45 (MADTSSRTDVSTDGDTDHRDLGSDRGHMHAAASDSSDRSKDKLDQ) are disordered. Basic and acidic residues-rich tracts occupy residues 15-27 (DTDHRDLGSDRGH) and 35-45 (SSDRSKDKLDQ). The 64-residue stretch at 44–107 (DQKTLRRLAQ…SSGDQAHSTG (64 aa)) folds into the bZIP domain. Coiled-coil stretches lie at residues 45–142 (QKTL…HAGD) and 217–233 (INSLQQTSQQAEDALSQ). The basic motif stretch occupies residues 46 to 66 (KTLRRLAQNREAARKSRLRKK). The segment at 72 to 86 (LENSRLKLTQLEQEL) is leucine-zipper. One can recognise a DOG1 domain in the interval 111–327 (ALAFDAEHSR…RALSSLWLAR (217 aa)).

The protein belongs to the bZIP family. In terms of assembly, binds DNA as a dimer. Interacts with NPR1, NPR3 and NPR4. Interacts with GRXC9/GRX480. In terms of tissue distribution, expressed predominantly in roots and flowers.

It is found in the nucleus. Its function is as follows. Transcriptional activator that binds specifically to the DNA sequence 5'-TGACG-3'. Recognizes ocs elements like the as-1 motif of the cauliflower mosaic virus 35S promoter. Binding to the as-1-like cis elements mediate auxin- and salicylic acid-inducible transcription. May be involved in the induction of the systemic acquired resistance (SAR) via its interaction with NPR1. Could also bind to the Hex-motif (5'-TGACGTGG-3') another cis-acting element found in plant histone promoters. The chain is Transcription factor TGA6 (TGA6) from Arabidopsis thaliana (Mouse-ear cress).